The following is a 250-amino-acid chain: Pyrroloquinoline-quinone synthase (250 aa).

Belongs to the PqqC family.

The enzyme catalyses 6-(2-amino-2-carboxyethyl)-7,8-dioxo-1,2,3,4,7,8-hexahydroquinoline-2,4-dicarboxylate + 3 O2 = pyrroloquinoline quinone + 2 H2O2 + 2 H2O + H(+). It participates in cofactor biosynthesis; pyrroloquinoline quinone biosynthesis. In terms of biological role, ring cyclization and eight-electron oxidation of 3a-(2-amino-2-carboxyethyl)-4,5-dioxo-4,5,6,7,8,9-hexahydroquinoline-7,9-dicarboxylic-acid to PQQ. The chain is Pyrroloquinoline-quinone synthase from Xanthomonas oryzae pv. oryzae (strain MAFF 311018).